The following is an 81-amino-acid chain: Large ribosomal subunit protein bL31B (81 aa).

It belongs to the bacterial ribosomal protein bL31 family. Type B subfamily. In terms of assembly, part of the 50S ribosomal subunit.

In Halalkalibacterium halodurans (strain ATCC BAA-125 / DSM 18197 / FERM 7344 / JCM 9153 / C-125) (Bacillus halodurans), this protein is Large ribosomal subunit protein bL31B.